A 434-amino-acid polypeptide reads, in one-letter code: Alpha-enolase (434 aa).

An N-acetylserine modification is found at serine 2. Lysine 5 carries the post-translational modification N6-acetyllysine. Phosphoserine is present on serine 27. Residue serine 40 participates in Mg(2+) binding. A Phosphotyrosine modification is found at tyrosine 44. Residue lysine 60 is modified to N6-acetyllysine; alternate. Lysine 60 is subject to N6-succinyllysine; alternate. An N6-acetyllysine mark is found at lysine 64 and lysine 71. Lysine 89 bears the N6-acetyllysine; alternate mark. Residue lysine 89 is modified to N6-succinyllysine; alternate. An N6-acetyllysine mark is found at lysine 92 and lysine 126. Substrate-binding residues include histidine 158 and glutamate 167. N6-acetyllysine occurs at positions 193 and 199. The residue at position 202 (lysine 202) is an N6-acetyllysine; alternate. Residue lysine 202 forms a Glycyl lysine isopeptide (Lys-Gly) (interchain with G-Cter in SUMO2); alternate linkage. Glutamate 210 acts as the Proton donor in catalysis. N6-acetyllysine; alternate occurs at positions 228 and 233. Lysine 228 bears the N6-succinyllysine; alternate mark. Lysine 228 carries the post-translational modification N6-(2-hydroxyisobutyryl)lysine; alternate. Residue lysine 233 is modified to N6-malonyllysine; alternate. Residue aspartate 245 participates in Mg(2+) binding. The residue at position 254 (serine 254) is a Phosphoserine. The residue at position 256 (lysine 256) is an N6-acetyllysine. 2 positions are modified to phosphoserine: serine 263 and serine 272. N6-acetyllysine; alternate is present on lysine 281. Lysine 281 is subject to N6-(2-hydroxyisobutyryl)lysine; alternate. Residue lysine 285 is modified to N6-acetyllysine. Tyrosine 287 carries the post-translational modification Phosphotyrosine. The residue at position 291 (serine 291) is a Phosphoserine. Mg(2+) is bound by residues glutamate 293 and aspartate 318. Residues glutamate 293 and aspartate 318 each coordinate substrate. Lysine 335 and lysine 343 each carry N6-acetyllysine. Lysine 343 acts as the Proton acceptor in catalysis. Substrate is bound by residues 370 to 373 (SHRS) and lysine 394. Positions 405–434 (AKYNQLLRIEEELGSKAKFAGRNFRNPLAK) are required for interaction with PLG. Lysine 406 is subject to N6-acetyllysine. Lysine 420 carries the N6-acetyllysine; alternate modification. Lysine 420 is modified (N6-succinyllysine; alternate). Lysine 420 is subject to N6-malonyllysine; alternate.

The protein belongs to the enolase family. Mammalian enolase is composed of 3 isozyme subunits, alpha, beta and gamma, which can form homodimers or heterodimers which are cell-type and development-specific. ENO1 interacts with PLG in the neuronal plasma membrane and promotes its activation. The C-terminal lysine is required for this binding. Interacts with ENO4 and PGAM2. Interacts with CMTM6. The cofactor is Mg(2+). ISGylated. Post-translationally, lysine 2-hydroxyisobutyrylation (Khib) by p300/EP300 activates the phosphopyruvate hydratase activity.

The protein localises to the cytoplasm. The protein resides in the cell membrane. The catalysed reaction is (2R)-2-phosphoglycerate = phosphoenolpyruvate + H2O. It functions in the pathway carbohydrate degradation; glycolysis; pyruvate from D-glyceraldehyde 3-phosphate: step 4/5. Its function is as follows. Glycolytic enzyme the catalyzes the conversion of 2-phosphoglycerate to phosphoenolpyruvate. In addition to glycolysis, involved in various processes such as growth control, hypoxia tolerance and allergic responses. May also function in the intravascular and pericellular fibrinolytic system due to its ability to serve as a receptor and activator of plasminogen on the cell surface of several cell-types such as leukocytes and neurons. Stimulates immunoglobulin production. The polypeptide is Alpha-enolase (ENO1) (Pongo abelii (Sumatran orangutan)).